A 332-amino-acid polypeptide reads, in one-letter code: Terpene synthase 1 (332 aa).

The short motif at 81-86 is the DDxx(x)D/E motif element; the sequence is DDGLDA. The NDxxSxxxD/E motif signature appears at 221–229; sequence NDLVSYEKE.

This sequence belongs to the terpene synthase family.

It catalyses the reaction (2E,6E)-farnesyl diphosphate = (2S,3R,6S,9S)-(-)-protoillud-7-ene + diphosphate. Terpene synthase that converts its substrate farnesyl diphosphate (FPP) into the sesquiterpene protoillud-7-ene. In Acytostelium subglobosum (Slime mold), this protein is Terpene synthase 1.